Here is a 243-residue protein sequence, read N- to C-terminus: Pyridoxine 5'-phosphate synthase (243 aa).

Asn-9 contributes to the 3-amino-2-oxopropyl phosphate binding site. 11-12 is a 1-deoxy-D-xylulose 5-phosphate binding site; the sequence is DH. Arg-20 contributes to the 3-amino-2-oxopropyl phosphate binding site. Residue His-45 is the Proton acceptor of the active site. Arg-47 and His-52 together coordinate 1-deoxy-D-xylulose 5-phosphate. Glu-72 acts as the Proton acceptor in catalysis. Thr-102 is a 1-deoxy-D-xylulose 5-phosphate binding site. The active-site Proton donor is His-193. 3-amino-2-oxopropyl phosphate contacts are provided by residues Gly-194 and 215–216; that span reads GH.

This sequence belongs to the PNP synthase family. Homooctamer; tetramer of dimers.

Its subcellular location is the cytoplasm. The enzyme catalyses 3-amino-2-oxopropyl phosphate + 1-deoxy-D-xylulose 5-phosphate = pyridoxine 5'-phosphate + phosphate + 2 H2O + H(+). It participates in cofactor biosynthesis; pyridoxine 5'-phosphate biosynthesis; pyridoxine 5'-phosphate from D-erythrose 4-phosphate: step 5/5. In terms of biological role, catalyzes the complicated ring closure reaction between the two acyclic compounds 1-deoxy-D-xylulose-5-phosphate (DXP) and 3-amino-2-oxopropyl phosphate (1-amino-acetone-3-phosphate or AAP) to form pyridoxine 5'-phosphate (PNP) and inorganic phosphate. This is Pyridoxine 5'-phosphate synthase from Photorhabdus laumondii subsp. laumondii (strain DSM 15139 / CIP 105565 / TT01) (Photorhabdus luminescens subsp. laumondii).